Here is a 331-residue protein sequence, read N- to C-terminus: tRNA N6-adenosine threonylcarbamoyltransferase (331 aa).

A divalent metal cation-binding residues include histidine 108, histidine 112, and tyrosine 129. Substrate is bound by residues 129–133 (YASGG), aspartate 161, glycine 176, glutamate 180, and asparagine 261. Residue aspartate 289 participates in a divalent metal cation binding.

Belongs to the KAE1 / TsaD family. As to quaternary structure, component of the EKC/KEOPS complex composed of at least BUD32, CGI121, GON7, KAE1 and PCC1; the whole complex dimerizes. A divalent metal cation is required as a cofactor.

Its subcellular location is the cytoplasm. It localises to the nucleus. The catalysed reaction is L-threonylcarbamoyladenylate + adenosine(37) in tRNA = N(6)-L-threonylcarbamoyladenosine(37) in tRNA + AMP + H(+). In terms of biological role, component of the EKC/KEOPS complex that is required for the formation of a threonylcarbamoyl group on adenosine at position 37 (t(6)A37) in tRNAs that read codons beginning with adenine. The complex is probably involved in the transfer of the threonylcarbamoyl moiety of threonylcarbamoyl-AMP (TC-AMP) to the N6 group of A37. KAE1 likely plays a direct catalytic role in this reaction, but requires other protein(s) of the complex to fulfill this activity. The EKC/KEOPS complex also promotes both telomere uncapping and telomere elongation. The complex is required for efficient recruitment of transcriptional coactivators. The polypeptide is tRNA N6-adenosine threonylcarbamoyltransferase (Encephalitozoon cuniculi (strain GB-M1) (Microsporidian parasite)).